A 180-amino-acid polypeptide reads, in one-letter code: Oligoribonuclease (180 aa).

The region spanning 7-170 is the Exonuclease domain; the sequence is LIWIDLEMTG…DDIRESLAEL (164 aa). The active site involves Tyr128.

The protein belongs to the oligoribonuclease family.

It localises to the cytoplasm. Functionally, 3'-to-5' exoribonuclease specific for small oligoribonucleotides. This Pectobacterium atrosepticum (strain SCRI 1043 / ATCC BAA-672) (Erwinia carotovora subsp. atroseptica) protein is Oligoribonuclease.